The sequence spans 151 residues: Superoxide dismutase [Cu-Zn] 4 (151 aa).

The Cu cation site is built by histidine 45, histidine 47, and histidine 62. The cysteines at positions 56 and 145 are disulfide-linked. Zn(2+) contacts are provided by histidine 62, histidine 70, histidine 79, and aspartate 82. Histidine 120 is a binding site for Cu cation.

Belongs to the Cu-Zn superoxide dismutase family. As to quaternary structure, homodimer. Cu cation is required as a cofactor. It depends on Zn(2+) as a cofactor.

It is found in the cytoplasm. It catalyses the reaction 2 superoxide + 2 H(+) = H2O2 + O2. Destroys radicals which are normally produced within the cells and which are toxic to biological systems. Protects spores from cellular damage caused by UV LIGHT. The chain is Superoxide dismutase [Cu-Zn] 4 (sodD) from Dictyostelium discoideum (Social amoeba).